Consider the following 274-residue polypeptide: MHVPQFISTGALLALLARPAAAHTRMFSVWVNGVDQGDGQNVYIRTPPNTDPIKDLASPALACNVKGGEPVPQFVSASAGDKLTFEWYRVKRGDDIIDPSHSGPITTWIAAFTSPTMDGTGPVWSKIHEEGYDASTKSWAVDKLIANKGMWDFTLPSQLKPGKYMLRQEIVAHHESDATFDKNPKRGAQFYPSCVQVDVKGVGGDAVPDQAFDFNKGYKYSDPGIAFDMYTDFDSYPIPGPPVWDAQDEGCCFIDGVDTTSVKEVVKQIICVLK.

The N-terminal stretch at 1–22 (MHVPQFISTGALLALLARPAAA) is a signal peptide. H23 contributes to the Cu(2+) binding site. C63 and C194 are joined by a disulfide. Residues G67, D98, and S100 each contribute to the (1,4-beta-D-glucosyl)n site. Residue H101 participates in Cu(2+) binding. H174 lines the O2 pocket. D177 serves as a coordination point for (1,4-beta-D-glucosyl)n. Residue Y191 coordinates Cu(2+).

Belongs to the polysaccharide monooxygenase AA9 family. Cu(2+) is required as a cofactor.

Its subcellular location is the secreted. The catalysed reaction is [(1-&gt;4)-beta-D-glucosyl]n+m + reduced acceptor + O2 = 4-dehydro-beta-D-glucosyl-[(1-&gt;4)-beta-D-glucosyl]n-1 + [(1-&gt;4)-beta-D-glucosyl]m + acceptor + H2O.. Functionally, lytic polysaccharide monooxygenase (LPMO) that depolymerizes crystalline and amorphous polysaccharides via the oxidation of scissile alpha- or beta-(1-4)-glycosidic bonds, yielding C4 oxidation products. Catalysis by LPMOs requires the reduction of the active-site copper from Cu(II) to Cu(I) by a reducing agent and H(2)O(2) or O(2) as a cosubstrate. Cleaves a range of polysaccharides, including cellulose, xyloglucan, mixed-linkage glucan and glucomannan. The polypeptide is AA9 family lytic polysaccharide monooxygenase A (Collariella virescens (Soil fungus)).